The primary structure comprises 181 residues: Dehydration-responsive element-binding protein 1E (181 aa).

The Nuclear localization signal signature appears at 14-26 (KKRAGRRIFKETR). Positions 29–86 (IYRGVRRRDGDKWVCEVREPIHQRRVWLGTYPTADMAARAHDVAVLALRGRSACLNFS) form a DNA-binding region, AP2/ERF.

This sequence belongs to the AP2/ERF transcription factor family. ERF subfamily.

It is found in the nucleus. In terms of biological role, transcriptional activator that binds specifically to the DNA sequence 5'-[AG]CCGAC-3'. Binding to the C-repeat/DRE element mediates cold or dehydration-inducible transcription. CBF/DREB1 factors play a key role in freezing tolerance and cold acclimation. This Arabidopsis thaliana (Mouse-ear cress) protein is Dehydration-responsive element-binding protein 1E (DREB1E).